A 316-amino-acid chain; its full sequence is Daunorubicin resistance ATP-binding protein DrrA3 (316 aa).

Residues 6 to 236 (ITVDGAEKRY…TGGDRIDVVL (231 aa)) enclose the ABC transporter domain. Position 38-45 (38-45 (GPNGAGKT)) interacts with ATP.

It belongs to the ABC transporter superfamily. Drug exporter-1 (DrugE1) (TC 3.A.1.105) family. The complex is probably composed of two ATP-binding proteins (DrrA3) and two transmembrane proteins (DrrB3).

It localises to the cell membrane. The enzyme catalyses daunorubicin(in) + ATP + H2O = daunorubicin(out) + ADP + phosphate + H(+). Part of the ABC transporter complex DrrA3B3 involved in daunorubicin efflux. Responsible for energy coupling to the transport system. Confers self-resistance to daunorubicin, an antibiotic produced by S.coeruleorubidus. The efficiency of DrrA3B3 to export daunorubicin is probably lower than that of DrrA1B1 or DrrA2B2. The protein is Daunorubicin resistance ATP-binding protein DrrA3 of Streptomyces coeruleorubidus.